Here is a 330-residue protein sequence, read N- to C-terminus: MISLESQVLERHLSFFDGKSVLFAGGISDNFPQTLASKCSSIQIWSCYFDYARTQSAVNFSVEFQGQADLIVYYWTKNKQEVNFQLIQLLAQASIGQEILIIGENRCGVRSVEKTLAPYGEIAKIDSARRCGLYHFSLQNKPHFELKNFWKTYQHPTIQDLTIYSLPGVFSAAELDTGTELLLSTIDNKIKGKVLDLGCGAGVIGSVIKKSSTNAQITMTDIHAMALESAHKTLSENQLQGEVYASDVFSDIEGKFDLIISNPPFHDGIDTAYRAVTELITQAKWHLNQGGELRIVANAFLPYPELLRQHFGDYEILAQTGKFKVYSVKN.

The protein belongs to the methyltransferase superfamily. RsmC family. Monomer.

It localises to the cytoplasm. It catalyses the reaction guanosine(1207) in 16S rRNA + S-adenosyl-L-methionine = N(2)-methylguanosine(1207) in 16S rRNA + S-adenosyl-L-homocysteine + H(+). Its function is as follows. Specifically methylates the guanine in position 1207 of 16S rRNA in the 30S particle. In Haemophilus influenzae (strain 86-028NP), this protein is Ribosomal RNA small subunit methyltransferase C.